A 228-amino-acid chain; its full sequence is MEQEICVISFSGGQDSTTLAVWAKKRFKKVCLVGFDYAQKHSVELECAQKIASLLQLPYEIISLDFLENITRSALFKNSNDLMGHSHAQNKDLPNSFVPNRNAIFITLLHSYAQKIGASNIALGVSQADFSGYPDCKEDFIKSIEHALNLGSNTAIKILTPLMFLNKAQEFQMAKDLGVLDLVIKETHTCYQGERRILHAYGYGCGECPACQLRKKGYEEFQAKALFQ.

Phe10–Ala20 contacts ATP. Residues Cys190, Cys205, Cys208, and Cys211 each contribute to the Zn(2+) site.

It belongs to the QueC family. Requires Zn(2+) as cofactor.

The catalysed reaction is 7-carboxy-7-deazaguanine + NH4(+) + ATP = 7-cyano-7-deazaguanine + ADP + phosphate + H2O + H(+). It functions in the pathway purine metabolism; 7-cyano-7-deazaguanine biosynthesis. Functionally, catalyzes the ATP-dependent conversion of 7-carboxy-7-deazaguanine (CDG) to 7-cyano-7-deazaguanine (preQ(0)). In Helicobacter pylori (strain P12), this protein is 7-cyano-7-deazaguanine synthase.